A 520-amino-acid polypeptide reads, in one-letter code: Laccase (520 aa).

Residues 1 to 21 (MSRFQSLLAFVVASLAAVAHA) form the signal peptide. 2 Plastocyanin-like domains span residues 23 to 148 (IGPT…FVVY) and 160 to 302 (VDND…ILRY). Residues Asn72 and Asn75 are each glycosylated (N-linked (GlcNAc...) asparagine). The Cu cation site is built by His85, His87, His130, and His132. 2 disulfides stabilise this stretch: Cys106–Cys509 and Cys138–Cys226. Residues Asn210, Asn229, and Asn354 are each glycosylated (N-linked (GlcNAc...) asparagine). One can recognise a Plastocyanin-like 3 domain in the interval 369-491 (TVPVLLQIIS…AGFAVVFAED (123 aa)). Cu cation is bound by residues His416, His419, His421, His473, Cys474, His475, and His479.

This sequence belongs to the multicopper oxidase family. Cu cation serves as cofactor.

The protein localises to the secreted. The catalysed reaction is 4 hydroquinone + O2 = 4 benzosemiquinone + 2 H2O. Lignin degradation and detoxification of lignin-derived products. Has activity towards guaiacol. This Trametes hirsuta (White-rot fungus) protein is Laccase.